The following is a 471-amino-acid chain: Argininosuccinate lyase (471 aa).

This sequence belongs to the lyase 1 family. Argininosuccinate lyase subfamily.

The protein resides in the cytoplasm. It catalyses the reaction 2-(N(omega)-L-arginino)succinate = fumarate + L-arginine. It functions in the pathway amino-acid biosynthesis; L-arginine biosynthesis; L-arginine from L-ornithine and carbamoyl phosphate: step 3/3. This chain is Argininosuccinate lyase, found in Deinococcus radiodurans (strain ATCC 13939 / DSM 20539 / JCM 16871 / CCUG 27074 / LMG 4051 / NBRC 15346 / NCIMB 9279 / VKM B-1422 / R1).